Consider the following 221-residue polypeptide: DVLPDSIDWREKGAVVPVKNQGGCGSCWAFDAIAAVEGINQIVTGDLISLSEQQLVDCSTRNHGCEGGWPYRAFQYIINNGGINSEEHYPYTGTNGTCDTKENAHVVSIDSYRNVPSNDEKSLQKAVANQPVSVTMDAAGRDFQLYRNGIFTGSCNISANHYRTVGGRETENDKDYWTVKNSWGKNWGESGYIRVERNIAESSGKCGIAISPSYPIKEXXX.

3 disulfide bridges follow: cysteine 24–cysteine 65, cysteine 58–cysteine 98, and cysteine 155–cysteine 206. The active site involves cysteine 27. 2 N-linked (GlcNAc...) asparagine glycosylation sites follow: asparagine 95 and asparagine 156. Residues histidine 161 and asparagine 181 contribute to the active site.

The protein belongs to the peptidase C1 family.

It carries out the reaction Preferential cleavage of peptides with a proline residue at the P2 position.. Functionally, cysteine proteinase with a high level of diversity in substrate specificity, an amino acid bearing a proline residue at the P2 position is preferred. The chain is Zingipain-1 from Zingiber officinale (Ginger).